Here is a 191-residue protein sequence, read N- to C-terminus: uncharacterized protein (191 aa).

Helical transmembrane passes span 24-44 (IVRG…GASG), 51-71 (IIAA…LGAF), 114-134 (LIDG…FFLF), 139-159 (ALYV…VFIG), and 167-187 (IISG…CFMI).

The protein localises to the cell membrane. This is an uncharacterized protein from Methanocaldococcus jannaschii (strain ATCC 43067 / DSM 2661 / JAL-1 / JCM 10045 / NBRC 100440) (Methanococcus jannaschii).